Reading from the N-terminus, the 603-residue chain is MYNIYKSLNQQVQRALNTAFPEAASQVKESGDFLNPQLVAATKPEFGDFQINGALALARIIKKSPRQIAEILIKQLESNEVFKAICLPPEIAGPGFINLTLQNTCLINEITSRLNDDLLGVPLVNDDEITKKLKPVIVDFSSPNIAKEMHVGHLRSTIIGDSIARILNYRGYKVIRLNHVGDWGTQFGMLITHLKEVAPKALTTANVINLGNLVEFYKKAKQRFDEDEYFQQCSRNEVVNLQRGNKESLKAWELLCEQSRKEFNKIYDRLKIEISERGESFYNPFLQGVIDDLTRSGLLVEDDGAKCVFLNGINGKDGNPLPLIIQKADGGFNYATTDLAAIRYRLKDQPDGDGAGRIIYVTDSGQANHFAGVFQVAKRAKWLPSSSRIEHVPFGLVQGEDGKKLKTRSGETVRLKDLLDEAISRAKLDIERRLNEENRKESQAFIEKVSNTIGIAAVKYADLSQNRITNYQFSFDRMLALQGNTAPYLLYAVVRIAGINRKGGDLHSSVNKLNFSEPQEWRLIRELLKFDEVIIAVEEELLPNRLCNYLFELSQVFNRFYDQIPVLKAEEPSRSCRLALCQLTGDTLKKGLNLLGISTLERM.

Positions 143 to 153 match the 'HIGH' region motif; the sequence is PNIAKEMHVGH.

This sequence belongs to the class-I aminoacyl-tRNA synthetase family. As to quaternary structure, monomer.

The protein resides in the cytoplasm. The catalysed reaction is tRNA(Arg) + L-arginine + ATP = L-arginyl-tRNA(Arg) + AMP + diphosphate. The sequence is that of Arginine--tRNA ligase from Prochlorococcus marinus (strain SARG / CCMP1375 / SS120).